The following is a 359-amino-acid chain: Glycerol-1-phosphate dehydrogenase [NAD(P)+] (359 aa).

NAD(+) is bound by residues 107–111 and 129–132; these read GRVID and TAAS. Residue aspartate 134 coordinates substrate. Serine 138 lines the NAD(+) pocket. Substrate is bound at residue aspartate 181. Residues aspartate 181 and histidine 261 each contribute to the Zn(2+) site. Position 265 (histidine 265) interacts with substrate. Histidine 277 provides a ligand contact to Zn(2+).

The protein belongs to the glycerol-1-phosphate dehydrogenase family. The cofactor is Zn(2+).

Its subcellular location is the cytoplasm. It carries out the reaction sn-glycerol 1-phosphate + NAD(+) = dihydroxyacetone phosphate + NADH + H(+). The enzyme catalyses sn-glycerol 1-phosphate + NADP(+) = dihydroxyacetone phosphate + NADPH + H(+). It participates in membrane lipid metabolism; glycerophospholipid metabolism. Its function is as follows. Catalyzes the NAD(P)H-dependent reduction of dihydroxyacetonephosphate (DHAP or glycerone phosphate) to glycerol 1-phosphate (G1P). The G1P thus generated is used as the glycerophosphate backbone of phospholipids in the cellular membranes of Archaea. This Methanoregula boonei (strain DSM 21154 / JCM 14090 / 6A8) protein is Glycerol-1-phosphate dehydrogenase [NAD(P)+].